Reading from the N-terminus, the 525-residue chain is D-arabinono-1,4-lactone oxidase (525 aa).

The region spanning 23-197 (YSCRPQLYFQ…VKATIRVIPE (175 aa)) is the FAD-binding PCMH-type domain. Residue histidine 60 is modified to Pros-8alpha-FAD histidine.

The protein belongs to the oxygen-dependent FAD-linked oxidoreductase family. Requires FAD as cofactor.

It localises to the mitochondrion membrane. The enzyme catalyses D-arabinono-1,4-lactone + O2 = dehydro-D-arabinono-1,4-lactone + H2O2 + H(+). It functions in the pathway cofactor biosynthesis; D-erythroascorbate biosynthesis; dehydro-D-arabinono-1,4-lactone from D-arabinose: step 2/2. This chain is D-arabinono-1,4-lactone oxidase (ALO1), found in Kluyveromyces lactis (strain ATCC 8585 / CBS 2359 / DSM 70799 / NBRC 1267 / NRRL Y-1140 / WM37) (Yeast).